Reading from the N-terminus, the 74-residue chain is MAHPMQLGFQDAASPVMEELLHFHDHALMIVFLISTAVLYIIVVTVTTKLTDKYVLDAQEIEMVWTIMPAVVLI.

The Mitochondrial intermembrane portion of the chain corresponds to Met-1 to Ser-14. The helical transmembrane segment at Pro-15–Thr-45 threads the bilayer. The Mitochondrial matrix portion of the chain corresponds to Val-46–Ile-74.

Belongs to the cytochrome c oxidase subunit 2 family. As to quaternary structure, component of the cytochrome c oxidase (complex IV, CIV), a multisubunit enzyme composed of 14 subunits. The complex is composed of a catalytic core of 3 subunits MT-CO1, MT-CO2 and MT-CO3, encoded in the mitochondrial DNA, and 11 supernumerary subunits COX4I, COX5A, COX5B, COX6A, COX6B, COX6C, COX7A, COX7B, COX7C, COX8 and NDUFA4, which are encoded in the nuclear genome. The complex exists as a monomer or a dimer and forms supercomplexes (SCs) in the inner mitochondrial membrane with NADH-ubiquinone oxidoreductase (complex I, CI) and ubiquinol-cytochrome c oxidoreductase (cytochrome b-c1 complex, complex III, CIII), resulting in different assemblies (supercomplex SCI(1)III(2)IV(1) and megacomplex MCI(2)III(2)IV(2)). Found in a complex with TMEM177, COA6, COX18, COX20, SCO1 and SCO2. Interacts with TMEM177 in a COX20-dependent manner. Interacts with COX20. Interacts with COX16. It depends on Cu cation as a cofactor.

It localises to the mitochondrion inner membrane. It carries out the reaction 4 Fe(II)-[cytochrome c] + O2 + 8 H(+)(in) = 4 Fe(III)-[cytochrome c] + 2 H2O + 4 H(+)(out). Component of the cytochrome c oxidase, the last enzyme in the mitochondrial electron transport chain which drives oxidative phosphorylation. The respiratory chain contains 3 multisubunit complexes succinate dehydrogenase (complex II, CII), ubiquinol-cytochrome c oxidoreductase (cytochrome b-c1 complex, complex III, CIII) and cytochrome c oxidase (complex IV, CIV), that cooperate to transfer electrons derived from NADH and succinate to molecular oxygen, creating an electrochemical gradient over the inner membrane that drives transmembrane transport and the ATP synthase. Cytochrome c oxidase is the component of the respiratory chain that catalyzes the reduction of oxygen to water. Electrons originating from reduced cytochrome c in the intermembrane space (IMS) are transferred via the dinuclear copper A center (CU(A)) of subunit 2 and heme A of subunit 1 to the active site in subunit 1, a binuclear center (BNC) formed by heme A3 and copper B (CU(B)). The BNC reduces molecular oxygen to 2 water molecules using 4 electrons from cytochrome c in the IMS and 4 protons from the mitochondrial matrix. In Amia calva (Bowfin), this protein is Cytochrome c oxidase subunit 2 (mt-co2).